The primary structure comprises 227 residues: Isopentenyl-diphosphate Delta-isomerase 1 (227 aa).

Lysine 36 is a substrate binding site. Mg(2+) contacts are provided by histidine 40 and histidine 51. The Nudix hydrolase domain occupies leucine 49–isoleucine 199. Arginine 70 and lysine 74 together coordinate substrate. The active site involves cysteine 86. A substrate-binding site is contributed by serine 87. Glutamate 146 and glutamate 148 together coordinate Mg(2+). The active site involves glutamate 148. The residue at position 176 (lysine 176) is an N6-acetyllysine. Positions histidine 225–methionine 227 match the Microbody targeting signal motif.

Belongs to the IPP isomerase type 1 family. In terms of assembly, monomer. Mg(2+) serves as cofactor.

It localises to the peroxisome. The enzyme catalyses isopentenyl diphosphate = dimethylallyl diphosphate. Its pathway is isoprenoid biosynthesis; dimethylallyl diphosphate biosynthesis; dimethylallyl diphosphate from isopentenyl diphosphate: step 1/1. Its function is as follows. Catalyzes the 1,3-allylic rearrangement of the homoallylic substrate isopentenyl (IPP) to its highly electrophilic allylic isomer, dimethylallyl diphosphate (DMAPP). This chain is Isopentenyl-diphosphate Delta-isomerase 1 (IDI1), found in Mesocricetus auratus (Golden hamster).